Reading from the N-terminus, the 602-residue chain is Cholinesterase (602 aa).

The first 28 residues, 1 to 28 (MQSKGTIISIQFLLRFLLLWVLIGKSHT), serve as a signal peptide directing secretion. Asparagine 85 is a glycosylation site (N-linked (GlcNAc...) asparagine). Cysteine 93 and cysteine 120 are disulfide-bonded. Residue asparagine 134 is glycosylated (N-linked (GlcNAc...) asparagine). 144-145 (GG) lines the substrate pocket. Catalysis depends on serine 226, which acts as the Acyl-ester intermediate. Serine 226 is subject to Phosphoserine. Residues asparagine 269 and asparagine 284 are each glycosylated (N-linked (GlcNAc...) asparagine). Cysteine 280 and cysteine 291 are disulfide-bonded. Glutamate 353 acts as the Charge relay system in catalysis. An N-linked (GlcNAc...) asparagine glycan is attached at asparagine 369. Cysteine 428 and cysteine 547 form a disulfide bridge. The active-site Charge relay system is histidine 466. Asparagine 483, asparagine 509, asparagine 513, and asparagine 514 each carry an N-linked (GlcNAc...) asparagine glycan.

It belongs to the type-B carboxylesterase/lipase family. In terms of assembly, homotetramer; disulfide-linked. Dimer of dimers.

It localises to the secreted. It catalyses the reaction an acylcholine + H2O = a carboxylate + choline + H(+). Esterase with broad substrate specificity. Contributes to the inactivation of the neurotransmitter acetylcholine. Can degrade neurotoxic organophosphate esters. The protein is Cholinesterase (BCHE) of Panthera tigris tigris (Bengal tiger).